Reading from the N-terminus, the 450-residue chain is MSRKYFGTDGVRGKVGTFPITPDFAMKLGWAAGTVLASTGTKEVLIGKDTRISGYMLESAMEAGFSAAGVNVALIGPMPTPAVAYLASTFRADAGVVISASHNPFYDNGIKFFSNTGTKLNDAQELEIEALLEQALEHNALQCVASEKLGKVRRIDDAAGRYIEFCKGTFPNHLSLAGLKIVVDSAHGAAYHIAPNVYRELGAEVISINDKPNGVNINDHCGATHLDSLQSAVMIHEADLGIALDGDADRVMFVDHNGHVVDGDEILFILAQAAYQKGEMQGGVVGTLMSNLGLELALKQMGIPFLRAKVGDRYVVEQLKETGWQLGGEGSGHILSLQHASTGDGIVASLQVLKAILESGKRLAELKAGMTKLPQVLINVRLTSGSADSILSKDSVKQAVITAEEVLGNQGRVLLRKSGTEPLIRVMVESTDISLTQQQAEYIAQAVKVA.

Ser-101 acts as the Phosphoserine intermediate in catalysis. Mg(2+)-binding residues include Ser-101, Asp-245, Asp-247, and Asp-249. Position 101 is a phosphoserine (Ser-101).

The protein belongs to the phosphohexose mutase family. It depends on Mg(2+) as a cofactor. In terms of processing, activated by phosphorylation.

It carries out the reaction alpha-D-glucosamine 1-phosphate = D-glucosamine 6-phosphate. Catalyzes the conversion of glucosamine-6-phosphate to glucosamine-1-phosphate. The chain is Phosphoglucosamine mutase 2 from Shewanella sp. (strain MR-7).